A 409-amino-acid polypeptide reads, in one-letter code: MASGKATGKTDAPAPVIKLGGPRPPKVGSSGNASWFQAIKAKKLNSPQPKFEGSGVPDNENFKTSQQHGYWRRQARFKPGKGRRKPVPDAWYFYYTGTGPAADLNWGDSQDGIVWVAAKGADVKSRSNQGTRDPDKFDQYPLRFSDGGPDGNFRWDFIPLNRGRSGRSTAASSAASSRPPSREGSRGRRSGSEDDLIARAAKIIQDQQKKGSRITKAKADEMAHRRYCKRTIPPGYKVDQVFGPRTKGKEGNFGDDKMNEEGIKDGRVTAMLNLVPSSHACLFGSRVTPKLQPDGLHLKFEFTTVVPRDDPQFDNYVKICDQCVDGVGTRPKDDEPKPKSRSSSRPATRTSSPAPRQQRLKKEKRPKKQDDEVDKALTSDEERNNAQLEFDDEPKVINWGDSALGENEL.

Disordered regions lie at residues 1-32 (MASGKATGKTDAPAPVIKLGGPRPPKVGSSGN), 46-84 (SPQPKFEGSGVPDNENFKTSQQHGYWRRQARFKPGKGRR), 121-194 (ADVK…GSED), and 238-259 (VDQVFGPRTKGKEGNFGDDKMN). The segment at 29–160 (SSGNASWFQA…GNFRWDFIPL (132 aa)) is RNA-binding. Residues 31–156 (GNASWFQAIK…GGPDGNFRWD (126 aa)) enclose the CoV N NTD domain. The span at 70-84 (YWRRQARFKPGKGRR) shows a compositional bias: basic residues. Over residues 162 to 179 (RGRSGRSTAASSAASSRP) the composition is skewed to low complexity. 2 stretches are compositionally biased toward basic and acidic residues: residues 180–192 (PSREGSRGRRSGS) and 247–259 (KGKEGNFGDDKMN). Phosphoserine; by host occurs at positions 190 and 192. The 117-residue stretch at 215 to 331 (TKAKADEMAH…QCVDGVGTRP (117 aa)) folds into the CoV N CTD domain. Positions 226–333 (RYCKRTIPPG…VDGVGTRPKD (108 aa)) are dimerization. C320 and C323 are disulfide-bonded. The segment at 326-409 (GVGTRPKDDE…GDSALGENEL (84 aa)) is disordered. A compositionally biased stretch (low complexity) spans 341-356 (RSSSRPATRTSSPAPR). Basic residues predominate over residues 358–367 (QRLKKEKRPK). Positions 368-384 (KQDDEVDKALTSDEERN) are enriched in basic and acidic residues. Phosphothreonine; by host is present on T378. S379 carries the phosphoserine; by host modification.

Belongs to the gammacoronavirus nucleocapsid protein family. Homooligomer. Both monomeric and oligomeric forms interact with RNA. Interacts with protein M. Interacts with NSP3; this interaction serves to tether the genome to the newly translated replicase-transcriptase complex at a very early stage of infection. ADP-ribosylated. The ADP-ribosylation is retained in the virion during infection. Post-translationally, phosphorylated on serine and threonine residues.

The protein localises to the virion. It is found in the host endoplasmic reticulum-Golgi intermediate compartment. The protein resides in the host Golgi apparatus. Its function is as follows. Packages the positive strand viral genome RNA into a helical ribonucleocapsid (RNP) and plays a fundamental role during virion assembly through its interactions with the viral genome and membrane protein M. Plays an important role in enhancing the efficiency of subgenomic viral RNA transcription as well as viral replication. The sequence is that of Nucleoprotein from Avian infectious bronchitis virus (strain Gray) (IBV).